A 199-amino-acid polypeptide reads, in one-letter code: MIARDDITGLILAGGRGSRMGGTDKGLQPLHGTPMAMHTMMRLTPQVGGLMINANRNLAAYESFGVPVYTDTVPDFAGPLAGMLAGLEQCATPWMVTAPCDSPFLPTDLVARLAQAIEAEGADLAIPVTLDEDGRRQTQPVFCLMPVSALDSLVAYLSGGGRKIETWAASHRLAEVLFDDAAAFANINTLDELRTHETR.

GTP contacts are provided by residues 12–14 (LAG), K25, N53, D71, and D101. Mg(2+) is bound at residue D101.

The protein belongs to the MobA family. In terms of assembly, monomer. The cofactor is Mg(2+).

The protein localises to the cytoplasm. It catalyses the reaction Mo-molybdopterin + GTP + H(+) = Mo-molybdopterin guanine dinucleotide + diphosphate. In terms of biological role, transfers a GMP moiety from GTP to Mo-molybdopterin (Mo-MPT) cofactor (Moco or molybdenum cofactor) to form Mo-molybdopterin guanine dinucleotide (Mo-MGD) cofactor. This Cupriavidus necator (strain ATCC 17699 / DSM 428 / KCTC 22496 / NCIMB 10442 / H16 / Stanier 337) (Ralstonia eutropha) protein is Molybdenum cofactor guanylyltransferase.